A 190-amino-acid chain; its full sequence is UPF0301 protein TC_0483 (190 aa).

This sequence belongs to the UPF0301 (AlgH) family.

This chain is UPF0301 protein TC_0483, found in Chlamydia muridarum (strain MoPn / Nigg).